Consider the following 236-residue polypeptide: Small ribosomal subunit protein uS2c (236 aa).

This sequence belongs to the universal ribosomal protein uS2 family.

Its subcellular location is the plastid. It is found in the chloroplast. The sequence is that of Small ribosomal subunit protein uS2c (rps2) from Olimarabidopsis pumila (Dwarf rocket).